A 111-amino-acid polypeptide reads, in one-letter code: Ribosome-binding factor A (111 aa).

Belongs to the RbfA family. Monomer. Binds 30S ribosomal subunits, but not 50S ribosomal subunits or 70S ribosomes.

It localises to the cytoplasm. Its function is as follows. One of several proteins that assist in the late maturation steps of the functional core of the 30S ribosomal subunit. Associates with free 30S ribosomal subunits (but not with 30S subunits that are part of 70S ribosomes or polysomes). Required for efficient processing of 16S rRNA. May interact with the 5'-terminal helix region of 16S rRNA. The protein is Ribosome-binding factor A of Helicobacter pylori (strain J99 / ATCC 700824) (Campylobacter pylori J99).